A 157-amino-acid polypeptide reads, in one-letter code: Phosphopantetheine adenylyltransferase (157 aa).

S8 is a binding site for substrate. ATP contacts are provided by residues 8-9 (SF) and H16. Residues K40, T72, and R86 each coordinate substrate. ATP is bound by residues 87-89 (GLR), E97, and 122-128 (HSFLSSS).

The protein belongs to the bacterial CoaD family. As to quaternary structure, homohexamer. Mg(2+) serves as cofactor.

It is found in the cytoplasm. It carries out the reaction (R)-4'-phosphopantetheine + ATP + H(+) = 3'-dephospho-CoA + diphosphate. It participates in cofactor biosynthesis; coenzyme A biosynthesis; CoA from (R)-pantothenate: step 4/5. Its function is as follows. Reversibly transfers an adenylyl group from ATP to 4'-phosphopantetheine, yielding dephospho-CoA (dPCoA) and pyrophosphate. The polypeptide is Phosphopantetheine adenylyltransferase (Prochlorococcus marinus (strain MIT 9313)).